Here is a 229-residue protein sequence, read N- to C-terminus: Cytochrome c oxidase subunit 2 (229 aa).

The Mitochondrial intermembrane portion of the chain corresponds to 1-26; sequence MSTWANLGLQDSASPLMEQLIFFHDH. A helical membrane pass occupies residues 27 to 48; it reads ALLILVMITVLVGYLMFMLFFN. Residues 49–62 lie on the Mitochondrial matrix side of the membrane; sequence SYVNRFLLHGQLIE. A helical transmembrane segment spans residues 63-82; the sequence is MIWTILPAIILLFIAMPSLR. At 83–229 the chain is on the mitochondrial intermembrane side; sequence LLYLLDEINE…IKWISNSVNS (147 aa). Cu cation is bound by residues histidine 161, cysteine 196, glutamate 198, cysteine 200, histidine 204, and methionine 207. A Mg(2+)-binding site is contributed by glutamate 198.

This sequence belongs to the cytochrome c oxidase subunit 2 family. In terms of assembly, component of the cytochrome c oxidase (complex IV, CIV), a multisubunit enzyme composed of a catalytic core of 3 subunits and several supernumerary subunits. The complex exists as a monomer or a dimer and forms supercomplexes (SCs) in the inner mitochondrial membrane with ubiquinol-cytochrome c oxidoreductase (cytochrome b-c1 complex, complex III, CIII). Cu cation is required as a cofactor.

It localises to the mitochondrion inner membrane. The enzyme catalyses 4 Fe(II)-[cytochrome c] + O2 + 8 H(+)(in) = 4 Fe(III)-[cytochrome c] + 2 H2O + 4 H(+)(out). In terms of biological role, component of the cytochrome c oxidase, the last enzyme in the mitochondrial electron transport chain which drives oxidative phosphorylation. The respiratory chain contains 3 multisubunit complexes succinate dehydrogenase (complex II, CII), ubiquinol-cytochrome c oxidoreductase (cytochrome b-c1 complex, complex III, CIII) and cytochrome c oxidase (complex IV, CIV), that cooperate to transfer electrons derived from NADH and succinate to molecular oxygen, creating an electrochemical gradient over the inner membrane that drives transmembrane transport and the ATP synthase. Cytochrome c oxidase is the component of the respiratory chain that catalyzes the reduction of oxygen to water. Electrons originating from reduced cytochrome c in the intermembrane space (IMS) are transferred via the dinuclear copper A center (CU(A)) of subunit 2 and heme A of subunit 1 to the active site in subunit 1, a binuclear center (BNC) formed by heme A3 and copper B (CU(B)). The BNC reduces molecular oxygen to 2 water molecules using 4 electrons from cytochrome c in the IMS and 4 protons from the mitochondrial matrix. This is Cytochrome c oxidase subunit 2 (mt:CoII) from Drosophila ambigua (Fruit fly).